The sequence spans 169 residues: Large ribosomal subunit protein uL15 (169 aa).

The segment at 20–56 is disordered; sequence GRGIGSGKGKTGGRGVKGQKARSGVSIKGFEGGQMPL. Positions 21 to 35 are enriched in gly residues; the sequence is RGIGSGKGKTGGRGV.

The protein belongs to the universal ribosomal protein uL15 family. Part of the 50S ribosomal subunit.

In terms of biological role, binds to the 23S rRNA. The protein is Large ribosomal subunit protein uL15 of Methylorubrum extorquens (strain CM4 / NCIMB 13688) (Methylobacterium extorquens).